The following is a 211-amino-acid chain: Arginine exporter protein ArgO (211 aa).

A run of 6 helical transmembrane segments spans residues 1–21 (MFSYYFQGLALGAAMILPLGP), 37–57 (IMIALLCAISDLVLICAGIFG), 68–88 (LLALVTWGGVVFLLWYGFGAF), 111–131 (IIATMLAVTWLNPHVYLDTFV), 147–167 (WFALGTISASFLWFFGLAILA), and 182–202 (IINLVVGCVMWFIALQLARDG).

It belongs to the LysE/ArgO transporter (TC 2.A.75) family.

The protein resides in the cell inner membrane. It catalyses the reaction L-arginine(in) = L-arginine(out). In terms of biological role, involved in the export of arginine. Important to control the intracellular level of arginine and the correct balance between arginine and lysine. The chain is Arginine exporter protein ArgO from Escherichia coli O157:H7.